The primary structure comprises 341 residues: L-threonine 3-dehydrogenase (341 aa).

Cys-38 contacts Zn(2+). Catalysis depends on charge relay system residues Thr-40 and His-43. 6 residues coordinate Zn(2+): His-63, Glu-64, Cys-93, Cys-96, Cys-99, and Cys-107. NAD(+) contacts are provided by residues Ile-175, Asp-195, Arg-200, 262 to 264 (LGI), and 286 to 287 (IY).

Belongs to the zinc-containing alcohol dehydrogenase family. Homotetramer. Zn(2+) is required as a cofactor.

It localises to the cytoplasm. The catalysed reaction is L-threonine + NAD(+) = (2S)-2-amino-3-oxobutanoate + NADH + H(+). Its pathway is amino-acid degradation; L-threonine degradation via oxydo-reductase pathway; glycine from L-threonine: step 1/2. Functionally, catalyzes the NAD(+)-dependent oxidation of L-threonine to 2-amino-3-ketobutyrate. The protein is L-threonine 3-dehydrogenase of Shewanella loihica (strain ATCC BAA-1088 / PV-4).